The sequence spans 385 residues: Aspartate/prephenate aminotransferase (385 aa).

Positions 39, 125, and 175 each coordinate L-aspartate. At lysine 234 the chain carries N6-(pyridoxal phosphate)lysine. Position 361 (arginine 361) interacts with L-aspartate.

The protein belongs to the class-I pyridoxal-phosphate-dependent aminotransferase family. Homodimer. Pyridoxal 5'-phosphate is required as a cofactor.

It localises to the cytoplasm. It carries out the reaction L-aspartate + 2-oxoglutarate = oxaloacetate + L-glutamate. The catalysed reaction is L-arogenate + oxaloacetate = prephenate + L-aspartate. Its function is as follows. Catalyzes the reversible conversion of aspartate and 2-oxoglutarate to glutamate and oxaloacetate. Can also transaminate prephenate in the presence of aspartate. In Thermus thermophilus (strain ATCC 27634 / DSM 579 / HB8), this protein is Aspartate/prephenate aminotransferase (aspC).